A 198-amino-acid chain; its full sequence is ATP synthase subunit b (198 aa).

The helical transmembrane segment at 49–67 (IWKWANFLILAGGLGYLVG) threads the bilayer.

The protein belongs to the ATPase B chain family. F-type ATPases have 2 components, F(1) - the catalytic core - and F(0) - the membrane proton channel. F(1) has five subunits: alpha(3), beta(3), gamma(1), delta(1), epsilon(1). F(0) has three main subunits: a(1), b(2) and c(10-14). The alpha and beta chains form an alternating ring which encloses part of the gamma chain. F(1) is attached to F(0) by a central stalk formed by the gamma and epsilon chains, while a peripheral stalk is formed by the delta and b chains.

It is found in the cell inner membrane. In terms of biological role, f(1)F(0) ATP synthase produces ATP from ADP in the presence of a proton or sodium gradient. F-type ATPases consist of two structural domains, F(1) containing the extramembraneous catalytic core and F(0) containing the membrane proton channel, linked together by a central stalk and a peripheral stalk. During catalysis, ATP synthesis in the catalytic domain of F(1) is coupled via a rotary mechanism of the central stalk subunits to proton translocation. Its function is as follows. Component of the F(0) channel, it forms part of the peripheral stalk, linking F(1) to F(0). This is ATP synthase subunit b from Solibacter usitatus (strain Ellin6076).